Reading from the N-terminus, the 132-residue chain is MDTAYPREDTRAPTPSKAGAHTALTLGAPHPPPRDHLIWSVFSTLYLNLCCLGFLALAYSIKARDQKVVGDLEAARRFGSKAKCYNILAAMWTLVPPLLLLGLVVTGALHLARLAKDSAAFFSTKFDDADYD.

The span at 1–11 (MDTAYPREDTR) shows a compositional bias: basic and acidic residues. The segment at 1–21 (MDTAYPREDTRAPTPSKAGAH) is disordered. Topologically, residues 1-36 (MDTAYPREDTRAPTPSKAGAHTALTLGAPHPPPRDH) are extracellular. The chain crosses the membrane as a helical span at residues 37 to 57 (LIWSVFSTLYLNLCCLGFLAL). Residues Cys-50, Cys-51, and Cys-84 are each lipidated (S-palmitoyl cysteine). The Cytoplasmic segment spans residues 58-86 (AYSIKARDQKVVGDLEAARRFGSKAKCYN). A helical membrane pass occupies residues 87–107 (ILAAMWTLVPPLLLLGLVVTG). The Extracellular portion of the chain corresponds to 108 to 132 (ALHLARLAKDSAAFFSTKFDDADYD).

Belongs to the CD225/Dispanin family. Interacts with FKBP11. Palmitoylated. As to expression, detected in osteoblasts and fibroblasts (at protein level). Detected in bone.

The protein resides in the cell membrane. In terms of biological role, required for normal bone mineralization. This chain is Interferon-induced transmembrane protein 5 (IFITM5), found in Homo sapiens (Human).